The chain runs to 127 residues: Aspartate 1-decarboxylase (127 aa).

Ser-25 functions as the Schiff-base intermediate with substrate; via pyruvic acid in the catalytic mechanism. Ser-25 carries the pyruvic acid (Ser) modification. Thr-57 provides a ligand contact to substrate. The Proton donor role is filled by Tyr-58. 73 to 75 (GAA) is a binding site for substrate.

Belongs to the PanD family. In terms of assembly, heterooctamer of four alpha and four beta subunits. Requires pyruvate as cofactor. Is synthesized initially as an inactive proenzyme, which is activated by self-cleavage at a specific serine bond to produce a beta-subunit with a hydroxyl group at its C-terminus and an alpha-subunit with a pyruvoyl group at its N-terminus.

The protein resides in the cytoplasm. The catalysed reaction is L-aspartate + H(+) = beta-alanine + CO2. Its pathway is cofactor biosynthesis; (R)-pantothenate biosynthesis; beta-alanine from L-aspartate: step 1/1. Catalyzes the pyruvoyl-dependent decarboxylation of aspartate to produce beta-alanine. The protein is Aspartate 1-decarboxylase of Bacillus subtilis (strain 168).